The primary structure comprises 535 residues: Beta-hexosaminidase 3 (535 aa).

The N-terminal stretch at 1–24 (MRGSGAKIAGVLPLFMLFIAGTIS) is a signal peptide. A glycan (N-linked (GlcNAc...) asparagine) is linked at asparagine 92. A disulfide bridge links cysteine 292 with cysteine 334. Glutamate 329 functions as the Proton donor in the catalytic mechanism. Residues asparagine 331, asparagine 405, asparagine 441, and asparagine 496 are each glycosylated (N-linked (GlcNAc...) asparagine). Cysteine 506 and cysteine 532 are disulfide-bonded.

This sequence belongs to the glycosyl hydrolase 20 family. In terms of processing, N-glycosylated. In terms of tissue distribution, expressed in roots, leaves, stems, flowers and siliques.

The protein localises to the cell membrane. It carries out the reaction Hydrolysis of terminal non-reducing N-acetyl-D-hexosamine residues in N-acetyl-beta-D-hexosaminides.. Its activity is regulated as follows. Slightly inhibited by N-acetylcastanospermine. Its function is as follows. Has a broad substrate specificity. Can use synthetic substrates such as pyridylaminated chitotriose, p-nitrophenyl-beta-N-acetylglucosaminide, p-nitrophenyl-2-acetamido-2-deoxy-beta-D-glucopyranoside (pNP-GlcNAc), p-nitrophenyl-2-acetamido-2-deoxy-beta-D-galactopyranoside (pNP-GalNAc), 4-methylumbelliferyl-2-acetamido-2-deoxy-beta-D-glucopyranoside (MU-GlcNAc), and 4-methylumbelliferyl-6-sulfo-2-acetamido-2-deoxy-beta-D-glucopyranoside (MU-GlcNAc-6SO(4)) as substrates. Removes terminal GlcNAc residues from alpha1,3- and alpha1,6-mannosyl branches of biantennary N-glycans without any strict branch preference. Required for the presence of paucimannosidic N-glycans in glycoproteins of roots and leaves. The protein is Beta-hexosaminidase 3 (HEXO3) of Arabidopsis thaliana (Mouse-ear cress).